The sequence spans 88 residues: UPF0297 protein BPUM_2379 (88 aa).

This sequence belongs to the UPF0297 family.

This Bacillus pumilus (strain SAFR-032) protein is UPF0297 protein BPUM_2379.